Here is a 342-residue protein sequence, read N- to C-terminus: Ribosomal RNA small subunit methyltransferase H (342 aa).

S-adenosyl-L-methionine-binding positions include 43–45 (GGY), aspartate 61, phenylalanine 87, aspartate 108, and glutamine 115. The tract at residues 322 to 342 (ALDEASDGMNLPPLAELEKSR) is disordered.

Belongs to the methyltransferase superfamily. RsmH family.

It is found in the cytoplasm. The catalysed reaction is cytidine(1402) in 16S rRNA + S-adenosyl-L-methionine = N(4)-methylcytidine(1402) in 16S rRNA + S-adenosyl-L-homocysteine + H(+). In terms of biological role, specifically methylates the N4 position of cytidine in position 1402 (C1402) of 16S rRNA. This chain is Ribosomal RNA small subunit methyltransferase H, found in Hyphomonas neptunium (strain ATCC 15444).